The chain runs to 209 residues: Ubiquitin-conjugating enzyme E2 S (209 aa).

Residues 14–160 (QTIRQVMREL…ARMMTEIHAQ (147 aa)) enclose the UBC core domain. Cysteine 98 acts as the Glycyl thioester intermediate in catalysis. A disordered region spans residues 162–209 (AKCGAGAHGDDKDDDGPSTKKHAGLDKKLQDKKKEKLLKEKKRMLKRL). Over residues 169 to 199 (HGDDKDDDGPSTKKHAGLDKKLQDKKKEKLL) the composition is skewed to basic and acidic residues. Residues 200-209 (KEKKRMLKRL) are compositionally biased toward basic residues.

It belongs to the ubiquitin-conjugating enzyme family.

The catalysed reaction is S-ubiquitinyl-[E1 ubiquitin-activating enzyme]-L-cysteine + [E2 ubiquitin-conjugating enzyme]-L-cysteine = [E1 ubiquitin-activating enzyme]-L-cysteine + S-ubiquitinyl-[E2 ubiquitin-conjugating enzyme]-L-cysteine.. It functions in the pathway protein modification; protein ubiquitination. In terms of biological role, catalyzes the covalent attachment of ubiquitin to other proteins. Acts as an essential factor of the anaphase promoting complex/cyclosome (APC/C), a cell cycle-regulated ubiquitin ligase that controls progression through mitosis. Acts by specifically elongating polyubiquitin chains initiated by the E2 enzyme vih/UbcH10 on APC/C substrates, enhancing the degradation of APC/C substrates by the proteasome and promoting mitotic exit. This chain is Ubiquitin-conjugating enzyme E2 S, found in Drosophila erecta (Fruit fly).